We begin with the raw amino-acid sequence, 363 residues long: uncharacterized protein (363 aa).

The next 4 membrane-spanning stretches (helical) occupy residues 34 to 54, 60 to 80, 91 to 111, and 112 to 132; these read YVYD…IILW, LALF…TLLV, EIAD…TAAG, and LMFS…PLFL. The span at 232–245 shows a compositional bias: polar residues; sequence SSTTTHSTDSEQIL. A disordered region spans residues 232-363; sequence SSTTTHSTDS…SSQKKKPSRK (132 aa). Low complexity-rich tracts occupy residues 246 to 268 and 275 to 285; these read TSVS…TPPN and DSNSSDSSSSS. The span at 322–342 shows a compositional bias: basic and acidic residues; it reads SRSERNAQHHRNKDQEQRQDS.

It belongs to the chlamydial CPn_0443/CT_005/TC_0273 family.

It is found in the cell membrane. This is an uncharacterized protein from Chlamydia trachomatis serovar D (strain ATCC VR-885 / DSM 19411 / UW-3/Cx).